An 83-amino-acid chain; its full sequence is Small ribosomal subunit protein bS20 (83 aa).

Belongs to the bacterial ribosomal protein bS20 family.

Functionally, binds directly to 16S ribosomal RNA. The sequence is that of Small ribosomal subunit protein bS20 from Staphylococcus haemolyticus (strain JCSC1435).